We begin with the raw amino-acid sequence, 176 residues long: Salivary antigen 1 (176 aa).

A signal peptide spans Met-1–Gly-18.

Its subcellular location is the secreted. In Ctenocephalides felis (Cat flea), this protein is Salivary antigen 1.